The primary structure comprises 187 residues: Interferon alpha-3 (187 aa).

A signal peptide spans 1–23 (MALPCSFSVALVLLSCHSLCCLA). Intrachain disulfides connect Cys24–Cys122 and Cys52–Cys160. Asn94 and Asn101 each carry an N-linked (GlcNAc...) asparagine glycan.

The protein belongs to the alpha/beta interferon family.

Its subcellular location is the secreted. In terms of biological role, produced by macrophages, IFN-alpha have antiviral activities. Interferon stimulates the production of two enzymes: a protein kinase and an oligoadenylate synthetase. This Canis lupus familiaris (Dog) protein is Interferon alpha-3.